The chain runs to 465 residues: Cysteine--tRNA ligase (465 aa).

C27 contacts Zn(2+). The short motif at 29-39 (PTVYDDAHLGH) is the 'HIGH' region element. 3 residues coordinate Zn(2+): C207, H237, and E241. Residues 269–273 (KMSKS) carry the 'KMSKS' region motif. K272 serves as a coordination point for ATP.

The protein belongs to the class-I aminoacyl-tRNA synthetase family. In terms of assembly, monomer. The cofactor is Zn(2+).

It is found in the cytoplasm. The enzyme catalyses tRNA(Cys) + L-cysteine + ATP = L-cysteinyl-tRNA(Cys) + AMP + diphosphate. The polypeptide is Cysteine--tRNA ligase (Helicobacter pylori (strain Shi470)).